The sequence spans 216 residues: Glycerol-3-phosphate acyltransferase 3 (216 aa).

5 helical membrane-spanning segments follow: residues 6–26 (LLLV…YLVS), 58–78 (LVAS…GLVI), 92–112 (LLFA…WPVF), 125–145 (FGGM…VLII), and 158–178 (ITGV…SGFP).

It belongs to the PlsY family. Probably interacts with PlsX.

It is found in the cell membrane. It catalyses the reaction an acyl phosphate + sn-glycerol 3-phosphate = a 1-acyl-sn-glycero-3-phosphate + phosphate. It participates in lipid metabolism; phospholipid metabolism. Functionally, catalyzes the transfer of an acyl group from acyl-phosphate (acyl-PO(4)) to glycerol-3-phosphate (G3P) to form lysophosphatidic acid (LPA). This enzyme utilizes acyl-phosphate as fatty acyl donor, but not acyl-CoA or acyl-ACP. This Dehalococcoides mccartyi (strain CBDB1) protein is Glycerol-3-phosphate acyltransferase 3.